A 770-amino-acid chain; its full sequence is Disabled homolog 2 (770 aa).

Polar residues predominate over residues 1-16 (MSNEVETSATNGQPDQ). The tract at residues 1 to 38 (MSNEVETSATNGQPDQQAAPKAPSKKEKKKGPEKTDEY) is disordered. S2 is modified (N-acetylserine). S2 bears the Phosphoserine mark. Positions 45 to 196 (GDGVKYKAKL…KAVENGSEAL (152 aa)) constitute a PID domain. Y170 carries the post-translational modification Phosphotyrosine. A Phosphoserine modification is found at S193. Residues 230-447 (ESKDILLVDL…KPGRGRRTAK (218 aa)) are required for localization to clathrin-coated pits. Disordered regions lie at residues 284–482 (LNFF…LQPN) and 604–629 (VSTQPPSMHSSLLVTPPQPPPRAGPP). 2 consecutive short sequence motifs (DPF) follow at residues 293 to 295 (DPF) and 298 to 300 (DPF). A compositionally biased stretch (polar residues) spans 302-313 (QPDQSTPSSFDS). Phosphoserine; in mitosis is present on residues S326 and S328. The segment covering 366–396 (FSSSQTQPAVRTQNGVSEREQNGFSVKSSPN) has biased composition (polar residues). S401 carries the phosphoserine modification. Polar residues-rich tracts occupy residues 407–425 (SIQNGVKQDLESSVQSSPH), 466–480 (PSGQASPTGQPTALQ), and 604–616 (VSTQPPSMHSSLL). The tract at residues 604 to 732 (VSTQPPSMHS…SLPVTKSTDN (129 aa)) is sufficient for interaction with GRB2. Positions 619 to 627 (PPQPPPRAG) are required for interaction with CSK. Positions 649–770 (KDVKEMFKDF…YRDPFGNPFA (122 aa)) are required for interaction with MYO6. The interval 663 to 671 (PPAVPARKG) is required for interaction with GRB2 and CSK. S675, S723, and S729 each carry phosphoserine. Positions 709-725 (NKINEPPKPAPRQVSLP) are sufficient for interaction with SH3KBP1 SH3 domain. The interval 742–770 (SFGSSQASVASSQPVSSEMYRDPFGNPFA) is disordered. The span at 745-758 (SSQASVASSQPVSS) shows a compositional bias: low complexity.

Interacts (via NPXY motif) with DAB2 (via PID domain). Can interact (via PID domain) with LDLR, APP, APLP1 and APLP2, and weakly with INPP5D (via NPXY motifs); the interaction is impaired by tyrosine phosphorylation of the respective NPXY motifs. Can weakly interact (via PID domain) with LRP1 (via NPXY motif); the interaction is enhanced by tyrosine phosphorylation of the NPXY motif. Interacts with LRP2 (via NPXY motif); the interaction is not affected by tyrosine phosphorylation of the NPXY motif. Interacts with clathrin; in vitro can assemble clathrin triskelia into polyhedral coats. Interacts with AP2A2, ITGB1, ITGB3, ITGB5, PIAS2, DAB2IP, NOSTRIN, FCHO1, DVL3, EPS15, ITSN1 and EPS15L1. Interacts with SH3KBP1 (via SH3 domains). Interacts with GRB2; competes with SOS1 for binding to GRB2 and the interaction is enhanced by EGF and NT-3 stimulation. Interacts with MAP3K7; the interaction is induced by TGF-beta stimulation and may mediate TGF-beta stimulated JNK activation. Interacts with AXIN1 and PPP1CA; the interactions are mutually exclusive. Interacts with the globular tail of MYO6. Interacts (via DPF motifs) with FCHO2; the interaction is direct and required for DAB2-mediated LDLR endocytosis. Interacts with LRP6; the interaction involves LRP6 phosphorylation by CK2 and sequesters LRP6 towards clathrin-mediated endocytosis. Associates with the TGF-beta receptor complex. Interacts with SMAD2 and SMAD3; the interactions are enhanced upon TGF-beta stimulation. Interacts with GRB2; the interaction is enhanced by EGF and NT-3 stimulation. Interacts with SRC; the interaction is enhanced by EGF stimulation. Phosphorylated. Phosphorylation during mitosis is leading to membrane displacement. In terms of tissue distribution, expressed in deep invaginations, inclusion cysts and the surface epithelial cells of the ovary. Also expressed in breast epithelial cells, spleen, thymus, prostate, testis, macrophages, fibroblasts, lung epithelial cells, placenta, brain stem, heart and small intestine. Expressed in kidney proximal tubular epithelial cells (at protein level).

It localises to the cytoplasm. It is found in the cytoplasmic vesicle. Its subcellular location is the clathrin-coated vesicle membrane. The protein resides in the membrane. The protein localises to the clathrin-coated pit. Functionally, adapter protein that functions as a clathrin-associated sorting protein (CLASP) required for clathrin-mediated endocytosis of selected cargo proteins. Can bind and assemble clathrin, and binds simultaneously to phosphatidylinositol 4,5-bisphosphate (PtdIns(4,5)P2) and cargos containing non-phosphorylated NPXY internalization motifs, such as the LDL receptor, to recruit them to clathrin-coated pits. Can function in clathrin-mediated endocytosis independently of the AP-2 complex. Involved in endocytosis of integrin beta-1; this function seems to redundant with the AP-2 complex and seems to require DAB2 binding to endocytosis accessory EH domain-containing proteins such as EPS15, EPS15L1 and ITSN1. Involved in endocytosis of cystic fibrosis transmembrane conductance regulator/CFTR. Involved in endocytosis of megalin/LRP2 lipoprotein receptor during embryonal development. Required for recycling of the TGF-beta receptor. Involved in CFTR trafficking to the late endosome. Involved in several receptor-mediated signaling pathways. Involved in TGF-beta receptor signaling and facilitates phosphorylation of the signal transducer SMAD2. Mediates TFG-beta-stimulated JNK activation. May inhibit the canoniocal Wnt/beta-catenin signaling pathway by stabilizing the beta-catenin destruction complex through a competing association with axin preventing its dephosphorylation through protein phosphatase 1 (PP1). Sequesters LRP6 towards clathrin-mediated endocytosis, leading to inhibition of Wnt/beta-catenin signaling. May activate non-canonical Wnt signaling. In cell surface growth factor/Ras signaling pathways proposed to inhibit ERK activation by interrupting the binding of GRB2 to SOS1 and to inhibit SRC by preventing its activating phosphorylation at 'Tyr-419'. Proposed to be involved in modulation of androgen receptor (AR) signaling mediated by SRC activation; seems to compete with AR for interaction with SRC. Plays a role in the CSF-1 signal transduction pathway. Plays a role in cellular differentiation. Involved in cell positioning and formation of visceral endoderm (VE) during embryogenesis and proposed to be required in the VE to respond to Nodal signaling coming from the epiblast. Required for the epithelial to mesenchymal transition, a process necessary for proper embryonic development. May be involved in myeloid cell differentiation and can induce macrophage adhesion and spreading. May act as a tumor suppressor. This chain is Disabled homolog 2 (DAB2), found in Homo sapiens (Human).